The chain runs to 211 residues: ATP phosphoribosyltransferase (211 aa).

Belongs to the ATP phosphoribosyltransferase family. Short subfamily. In terms of assembly, heteromultimer composed of HisG and HisZ subunits.

The protein localises to the cytoplasm. The enzyme catalyses 1-(5-phospho-beta-D-ribosyl)-ATP + diphosphate = 5-phospho-alpha-D-ribose 1-diphosphate + ATP. It participates in amino-acid biosynthesis; L-histidine biosynthesis; L-histidine from 5-phospho-alpha-D-ribose 1-diphosphate: step 1/9. Functionally, catalyzes the condensation of ATP and 5-phosphoribose 1-diphosphate to form N'-(5'-phosphoribosyl)-ATP (PR-ATP). Has a crucial role in the pathway because the rate of histidine biosynthesis seems to be controlled primarily by regulation of HisG enzymatic activity. This chain is ATP phosphoribosyltransferase, found in Pseudomonas syringae pv. syringae (strain B728a).